We begin with the raw amino-acid sequence, 677 residues long: Beta-galactosidase (677 aa).

Residues 1 to 23 (MPGFLVRILPLLLALLLLGPTRG) form the signal peptide. Positions 24–28 (LRNAT) are excised as a propeptide. Asparagine 26 carries an N-linked (GlcNAc...) asparagine glycan. Residues tyrosine 83, glutamate 129, and asparagine 187 each coordinate substrate. The active-site Proton donor is glutamate 188. Cysteine 195 and cysteine 230 form a disulfide bridge. Asparagine 247 is a glycosylation site (N-linked (GlcNAc...) asparagine). The active-site Nucleophile is the glutamate 268. Tyrosine 333 contributes to the substrate binding site. Residues asparagine 464, asparagine 498, asparagine 545, and asparagine 555 are each glycosylated (N-linked (GlcNAc...) asparagine). A disulfide bridge connects residues cysteine 626 and cysteine 634. The disordered stretch occupies residues 654-677 (SKPVEKKLMPSPPQKNKDSWLDHV). Basic and acidic residues predominate over residues 668-677 (KNKDSWLDHV).

Belongs to the glycosyl hydrolase 35 family. In terms of assembly, homodimer. May form higher multimers.

The protein resides in the lysosome. It carries out the reaction Hydrolysis of terminal non-reducing beta-D-galactose residues in beta-D-galactosides.. Functionally, cleaves beta-linked terminal galactosyl residues from gangliosides, glycoproteins, and glycosaminoglycans. The chain is Beta-galactosidase (GLB1) from Pongo abelii (Sumatran orangutan).